The sequence spans 2195 residues: Integrator complex subunit 1 (2195 aa).

Residues 1-86 form a disordered region; that stretch reads MNRAKPTTVR…RPKLSSTPPL (86 aa). Phosphoserine is present on Ser13. Positions 34–45 are enriched in polar residues; the sequence is GQASESKTTSTL. Position 47 is an N6-acetyllysine (Lys47). Low complexity predominate over residues 62–75; sequence SASLSGTSALTGLT. At Thr83 the chain carries Phosphothreonine. The residue at position 87 (Ser87) is a Phosphoserine. The disordered stretch occupies residues 267–297; the sequence is LLQGEGARSGGELGAGSSPHPSLTEEEDSQT. 2 positions are modified to phosphoserine: Ser307 and Ser926. Residues 923-947 form a disordered region; sequence STASGEEDDEGESREQKAKKRQRQQ. A helical transmembrane segment spans residues 1165-1185; it reads HILVVHAMVILLTLGPPRSGD. A disordered region spans residues 1313-1347; it reads SLPPRRDSTEAPKPESSPEPPPGQGRTRAGTQVPV. Basic and acidic residues predominate over residues 1316-1325; it reads PRRDSTEAPK. Ser1320, Ser1328, and Ser1329 each carry phosphoserine.

The protein belongs to the Integrator subunit 1 family. Component of the Integrator complex, composed of core subunits INTS1, INTS2, INTS3, INTS4, INTS5, INTS6, INTS7, INTS8, INTS9/RC74, INTS10, INTS11/CPSF3L, INTS12, INTS13, INTS14 and INTS15. The core complex associates with protein phosphatase 2A subunits PPP2CA and PPP2R1A, to form the Integrator-PP2A (INTAC) complex. Interacts with ESRRB, ESRRB is not a core component of the Integrator complex and this association is a bridge for the interaction with the multiprotein complex Integrator; attracts the transcriptional machinery.

The protein resides in the nucleus. The protein localises to the nucleus membrane. Its function is as follows. Component of the integrator complex, a multiprotein complex that terminates RNA polymerase II (Pol II) transcription in the promoter-proximal region of genes. The integrator complex provides a quality checkpoint during transcription elongation by driving premature transcription termination of transcripts that are unfavorably configured for transcriptional elongation: the complex terminates transcription by (1) catalyzing dephosphorylation of the C-terminal domain (CTD) of Pol II subunit POLR2A/RPB1 and SUPT5H/SPT5, (2) degrading the exiting nascent RNA transcript via endonuclease activity and (3) promoting the release of Pol II from bound DNA. The integrator complex is also involved in terminating the synthesis of non-coding Pol II transcripts, such as enhancer RNAs (eRNAs), small nuclear RNAs (snRNAs), telomerase RNAs and long non-coding RNAs (lncRNAs). Within the integrator complex, INTS1 is involved in the post-termination step: INTS1 displaces INTS3 and the SOSS factors, allowing the integrator complex to return to the closed conformation, ready to bind to the paused elongation complex for another termination cycle. Mediates recruitment of cytoplasmic dynein to the nuclear envelope, probably as component of the integrator complex. In Mus musculus (Mouse), this protein is Integrator complex subunit 1.